Here is a 160-residue protein sequence, read N- to C-terminus: Protein cornichon homolog 3 (160 aa).

Over 1–10 the chain is Cytoplasmic; that stretch reads MAFTFAAFCY. Residues 11-31 traverse the membrane as a helical segment; it reads MLSLVLCAALIFFAIWHIIAF. The Lumenal portion of the chain corresponds to 32 to 72; the sequence is DELRTDFKSPIDQCNPVHARERLRNIERICFLLRKLVLPEY. Residues 73–93 traverse the membrane as a helical segment; that stretch reads SIHSLFCIMFLCAQEWLTLGL. The Cytoplasmic portion of the chain corresponds to 94–138; that stretch reads NVPLLFYHFWRYFHCPADSSELAYDPPVVMNADTLSYCQKEAWCK. Residues 139 to 159 traverse the membrane as a helical segment; sequence LAFYLLSFFYYLYCMIYTLVS. Serine 160 is a topological domain (lumenal).

This sequence belongs to the cornichon family. Acts as an auxiliary subunit for AMPA-selective glutamate receptors (AMPARs). Found in a complex with GRIA1, GRIA2, GRIA3, GRIA4, CNIH2, CACNG2, CACNG3, CACNG4, CACNG5, CACNG7 and CACNG8. As to expression, expression is up-regulated in dorsolateral prefrontal cortex of patients with schizophrenia (postmortem brain study).

Its subcellular location is the postsynaptic cell membrane. Its function is as follows. Regulates the trafficking and gating properties of AMPA-selective glutamate receptors (AMPARs). Promotes their targeting to the cell membrane and synapses and modulates their gating properties by regulating their rates of activation, deactivation and desensitization. The polypeptide is Protein cornichon homolog 3 (CNIH3) (Homo sapiens (Human)).